The sequence spans 182 residues: Endoribonuclease YbeY (182 aa).

Zn(2+)-binding residues include His115, His119, and His125.

It belongs to the endoribonuclease YbeY family. Requires Zn(2+) as cofactor.

It is found in the cytoplasm. In terms of biological role, single strand-specific metallo-endoribonuclease involved in late-stage 70S ribosome quality control and in maturation of the 3' terminus of the 16S rRNA. The polypeptide is Endoribonuclease YbeY (Bifidobacterium longum subsp. infantis (strain ATCC 15697 / DSM 20088 / JCM 1222 / NCTC 11817 / S12)).